The chain runs to 152 residues: Putative pre-16S rRNA nuclease (152 aa).

The protein belongs to the YqgF nuclease family.

It localises to the cytoplasm. Functionally, could be a nuclease involved in processing of the 5'-end of pre-16S rRNA. In Nitrosococcus oceani (strain ATCC 19707 / BCRC 17464 / JCM 30415 / NCIMB 11848 / C-107), this protein is Putative pre-16S rRNA nuclease.